Reading from the N-terminus, the 897-residue chain is MDAMPEYSLFLVRILEELDTKYSTVSYQDLCKSLCARFDLVHLAKLRSLLFYTACLDPAFPATLFKDKMRCSVEDQQSKKLMVAADIVTMFNLIQMNGGMAKDKLPMGPRPKFHKNQSFESCRSDTDVYKYNDNDRAYKLLDTRGHHVSRNSPKSDCNSCQQFIPTSDPNFLLGVTKDLKCRAASLDKLQHLPQYASVSPPPCEMQSTYFPMDIDSESTTDQESLHANPGIKDVYVSSGEPFTVHSCVQKRNIFKEDFHNLVAFSPHVITTECRANPKSGGNYHHRRELSKPPTFFNHSFELPYSNPYFEPVNSPLQNKGRVKHESLDDLQASTYFGPTTVSECVSNRRTSSKHGRQPAWPVKSLSLNTEEGPDFERSFLNGKVPKDNHRHNIGTMENDQHFQCAKDKPTASPSGFSKKSNGSKTKDMSSVACGPGIEKREVGRRYKDKSINCPSFQSSNVDNGMSVGTQTEQHESRKVKDYPSQNKFKERPPFKHSEEDSEIVSDNISDIFRFLDDMSVCESLGVVQPSCYNSNGSLSQVTKSDGDSSPERNTIKIGKTGIKLDRLFQSLENSDDELKESVCKLVLRIGEIEKKLESLSGVRGEISQVLSKLTRLDEKIQEPEVNGKSSDGGLVEQIKTDANLSPHVFQCHTTGHNMKVEKSPEWCCSEADGSESLRVKALKKSVFTRRSSRSLNEENSATESKVASITNSPRDWRTVSYSSHNGEEGKERDRHSEGKERHRKSREAERQYEAHQGHRSSKPPKDSYLVEQVFSPHHFPPTVKTHVKGSPLYTDLRLTGHADGKRSQPSWTIEEYKRNSGDKNKLSALDLQVQESLNPNNLEYWMEDIYTPGYDSLLKRKEAEFRRAKACKIGALIFAAACTVILVIVVPICTMKS.

The Cytoplasmic segment spans residues Met1 to Lys872. Disordered stretches follow at residues Ala405–Cys433, Ser450–Glu502, and Thr688–Asp766. Composition is skewed to polar residues over residues Ala411–Ser423 and Asn452–Thr471. Over residues Glu472–Glu498 the composition is skewed to basic and acidic residues. Polar residues predominate over residues Glu697–His724. A compositionally biased stretch (basic and acidic residues) spans Asn725–Gln756. The helical transmembrane segment at Ile873–Cys893 threads the bilayer. At Thr894–Ser897 the chain is on the extracellular side.

It belongs to the MINAR family.

Its subcellular location is the cell membrane. Functionally, intrinsically disordered protein which may negatively regulate mTOR signaling pathway by stabilizing the mTOR complex component DEPTOR. Negatively regulates angiogenesis. Negatively regulates cell growth. May play a role in neuronal development. This is Major intrinsically disordered Notch2-binding receptor 1 (minar1) from Danio rerio (Zebrafish).